Here is a 232-residue protein sequence, read N- to C-terminus: Expansin-YoaJ (232 aa).

Positions 1–25 (MKKIMSAFVGMVLLTIFCFSPQASA) are cleaved as a signal peptide. One can recognise an Expansin-like EG45 domain in the interval 58–127 (ITAINPADLN…MKDGKINIKW (70 aa)).

It is found in the secreted. Its subcellular location is the cell wall. Its function is as follows. May promote colonization of plant roots. May cause loosening and extension of plant cell walls by disrupting non-covalent bonding between cellulose microfibrils and matrix glucans. Has very low expansin activity (in vitro). No enzymatic activity has been found. Binds to peptidoglycan and to plant cell walls. This is Expansin-YoaJ (yoaJ) from Bacillus subtilis (strain 168).